We begin with the raw amino-acid sequence, 631 residues long: MQKLLFVFSVLLTVVLATAPFQVQCPSSPLIREAKHELCPEETLYLKKKKIKTKNKLIQFLKSLTEAKFSSKFYKRVLKDPPKIGIAISGGGYRSMLVGTGFISQMNDYGLFEYSDYIAGLSGGSWILMDLVVQNFEVKSLLQEWDLEEDLLLGIPEFDISEEEIVTNAKKEYNDNDLKMKKRQGGSLITSSSNFYEQIEEIMNSIEEIPEDYMITKRNLNPLARLKKIFFPNNTFTGTDAKIETFKKVLDFYKSLHLKIKPKKMEGFQISFTDYWGKAIVQRLKKNFDDDPNHSFSFSKLVNSSKKFKECSVPIPIFVANCKNGLLSNVIFEFTPFEFGSWENILRLFVKLPYLGSKIVSGKAEKCINNFDDLGFITATSSSIFNNVLIFIWNLASQSSREAMKALNMVMGIFGLGKEEIFSISKDSSRLETDYAVYQPNPFYLYPEKDNVLTNKNHLYLVDGGEDGENIPLRTLVIPERELDVIFVLDSSSDIDNYPNGSKLKRIFEKLDEENVHYQFPNNVKTFTHPIVIGCNATKRTGHDSFLPIIIYHANANHGNASNTSTFKITYNQSEVSSMLPTGRGVFSNDYDLYYKNCLGCILTKRTMDRLPRKKKFSPFCLQCFKDYCYS.

Positions 1–17 (MQKLLFVFSVLLTVVLA) are cleaved as a signal peptide. A required for lipid-binding and function in meiosis region spans residues 24–67 (QCPSSPLIREAKHELCPEETLYLKKKKIKTKNKLIQFLKSLTEA). The PLA2c domain maps to 24 to 631 (QCPSSPLIRE…LQCFKDYCYS (608 aa)). 3 N-linked (GlcNAc...) asparagine glycosylation sites follow: N233, N293, and N303. The helical transmembrane segment at 376–396 (FITATSSSIFNNVLIFIWNLA) threads the bilayer. N-linked (GlcNAc...) asparagine glycosylation is found at N500, N536, N560, N563, and N572.

Belongs to the lysophospholipase family. As to quaternary structure, interacts with SPO23. Glycosylated.

It is found in the endoplasmic reticulum membrane. It localises to the nucleus membrane. Its function is as follows. Regulates spindle pole duplication in meiosis I, but not in mitosis. Required for meiosis I, meiosis II chromosome segregation and spore formation. Binds phosphatidylinositol (4)P mono- and polyphosphates. This chain is Putative meiotic phospholipase SPO1 (SPO1), found in Saccharomyces cerevisiae (strain ATCC 204508 / S288c) (Baker's yeast).